We begin with the raw amino-acid sequence, 309 residues long: Mannitol-1-phosphatase (309 aa).

The active-site Tele-phosphohistidine intermediate is the histidine 82. Glutamate 166 serves as the catalytic Proton donor/acceptor.

The protein belongs to the phosphoglycerate mutase family.

The catalysed reaction is D-mannitol 1-phosphate + H2O = D-mannitol + phosphate. By diethyl pyrocarbonate (DEPC). Functionally, key enzyme for mannitol biosynthesis. This chain is Mannitol-1-phosphatase, found in Eimeria tenella (Coccidian parasite).